The following is a 344-amino-acid chain: Ig alpha chain C region (344 aa).

The 94-residue stretch at 6 to 99 (PTIYPLTLPP…SNPVQELDVN (94 aa)) folds into the Ig-like 1 domain. Cystine bridges form between Cys-26–Cys-84 and Cys-76–Cys-100. Asn-38 and Asn-99 each carry an N-linked (GlcNAc...) asparagine glycan. A glycan (O-linked (GalNAc) serine; in variant MOPC 47A) is linked at Ser-101. Disulfide bonds link Cys-114–Cys-171 and Cys-138–Cys-195. 2 Ig-like domains span residues 116 to 206 (PSLS…GTLT) and 219 to 321 (PQVH…KTID). N-linked (GlcNAc...) asparagine glycosylation is present at Asn-329. Residue Ser-331 is glycosylated (N-linked (GlcNAc...) asparagine; in variant M511).

In terms of biological role, ig alpha is the major immunoglobulin class in body secretions. It may serve both to defend against local infection and to prevent access of foreign antigens to the general immunologic system. The chain is Ig alpha chain C region from Mus musculus (Mouse).